The following is a 164-amino-acid chain: Large ribosomal subunit protein bL9 (164 aa).

The protein belongs to the bacterial ribosomal protein bL9 family.

Functionally, binds to the 23S rRNA. This is Large ribosomal subunit protein bL9 from Borrelia hermsii (strain HS1 / DAH).